A 365-amino-acid polypeptide reads, in one-letter code: Histidinol-phosphate aminotransferase 2 (365 aa).

K222 carries the N6-(pyridoxal phosphate)lysine modification.

Belongs to the class-II pyridoxal-phosphate-dependent aminotransferase family. Histidinol-phosphate aminotransferase subfamily. In terms of assembly, homodimer. Pyridoxal 5'-phosphate serves as cofactor.

The catalysed reaction is L-histidinol phosphate + 2-oxoglutarate = 3-(imidazol-4-yl)-2-oxopropyl phosphate + L-glutamate. It participates in amino-acid biosynthesis; L-histidine biosynthesis; L-histidine from 5-phospho-alpha-D-ribose 1-diphosphate: step 7/9. This chain is Histidinol-phosphate aminotransferase 2 (hisC2), found in Bordetella bronchiseptica (strain ATCC BAA-588 / NCTC 13252 / RB50) (Alcaligenes bronchisepticus).